Here is a 146-residue protein sequence, read N- to C-terminus: Hemoglobin subunit beta (146 aa).

V1 carries the post-translational modification N-acetylvaline; partial. In terms of domain architecture, Globin spans 2 to 146 (HLTDAEKAAV…VANALAHKYH (145 aa)). A Phosphothreonine modification is found at T12. Residue K59 is modified to N6-acetyllysine. H63 is a binding site for heme b. K82 is subject to N6-acetyllysine. H92 contacts heme b. C93 carries the post-translational modification S-nitrosocysteine. N6-acetyllysine is present on K144.

The protein belongs to the globin family. As to quaternary structure, heterotetramer of two alpha chains and two beta chains. Red blood cells.

Involved in oxygen transport from the lung to the various peripheral tissues. The chain is Hemoglobin subunit beta (HBB) from Procavia capensis habessinica (Abyssinian hyrax).